Consider the following 669-residue polypeptide: Filensin (669 aa).

The interval 1 to 33 is head; it reads MYRRSYVFQARQERYERAQPAGPAAQPGGTAPG. Ser-5 carries the post-translational modification Phosphoserine. Residues 33–318 form the IF rod domain; sequence GLAALQALGE…RIIEIEGSRL (286 aa). The coil 1A stretch occupies residues 34 to 68; the sequence is LAALQALGERVAVQVQRARALQQRHAGLRRQLDAF. Residue Ala-35 is modified to N-acetylalanine. The interval 69-77 is linker 1; it reads QRLGEQPGP. The coil 1B stretch occupies residues 78 to 177; it reads EDALARHVEA…RYKKNLLEIQ (100 aa). The segment at 178 to 194 is linker 12; sequence TYITVLQQIVQTAPQVS. A coil 2 region spans residues 195–318; that stretch reads LVTGMRESGL…RIIEIEGSRL (124 aa). The tail stretch occupies residues 319 to 669; that stretch reads SSVFIETPIS…GEKSLPDTRA (351 aa). At Ser-339 the chain carries Phosphoserine. 3 disordered regions span residues 380–435, 449–468, and 505–618; these read VEET…GGQI, RVSG…FTKG, and HHDG…KALS. Residues 408–417 show a composition bias toward gly residues; that stretch reads SQPGAGGGHG. Gly-432 is lipidated: N-myristoyl glycine. Ser-513 carries the phosphoserine modification. Positions 545–570 are enriched in basic and acidic residues; sequence NGLRAKEPKDLEEKDDDGKKEAEGSR. Polar residues predominate over residues 583–593; it reads PSTSHSQTSGS. The residue at position 585 (Thr-585) is a Phosphothreonine.

Belongs to the intermediate filament family. As to quaternary structure, part of a complex required for lens intermediate filament formation composed of BFSP1, BFSP2 and CRYAA. Identified in a complex that contains VIM, EZR, AHNAK, BFSP1, BFSP2, ANK2, PLEC, PRX and spectrin. Found in a complex composed of PPL (via C-terminal linker domain), BFSP1 and BFSP2 in the retinal lens. Within the complex interacts with BFSP2. Interacts (via C-terminus) with MIP (via C-terminus) in aged lens fiber cells. Post-translationally, proteolytically cleaved during lens cell fiber differentiation with increased fragmentation as fiber cell age increases. Myristoylated at Gly-432 following proteolytic cleavage at Asp-431. In terms of processing, acetylated at Ala-35 following proteolytic cleavage at Leu-34. In terms of tissue distribution, detected in eye lens fiber cells (at protein level). Expressed in retinal lens epithelial cells (at protein level).

Its subcellular location is the cell membrane. It localises to the cytoplasm. The protein resides in the cytoskeleton. It is found in the cell cortex. Required for the correct formation of lens intermediate filaments as part of a complex composed of BFSP1, BFSP2 and CRYAA. Involved in altering the calcium regulation of MIP water permeability. In Mus musculus (Mouse), this protein is Filensin (Bfsp1).